The primary structure comprises 219 residues: PKHD-type hydroxylase Mmar10_1675 (219 aa).

Residues 77–171 (TLSRILVSRY…RVAVVGWVRS (95 aa)) enclose the Fe2OG dioxygenase domain. Fe cation is bound by residues His-95, Asp-97, and His-152. Arg-162 contacts 2-oxoglutarate.

The cofactor is Fe(2+). L-ascorbate serves as cofactor.

The sequence is that of PKHD-type hydroxylase Mmar10_1675 from Maricaulis maris (strain MCS10) (Caulobacter maris).